Here is a 647-residue protein sequence, read N- to C-terminus: EEGWVPGPSLISLQMRVTPKLMRLAWDGFPLHYSEKHGWGYLVPGRQDNLPAASAEPEGPVCPHRAIERLYRQHCLQRGQEQPPEEAGVEDELMVLEGSSMWQKVEELSQLELDMERPGRAEQSQMQDEDGLPELVEESSQPSFHHGNGPYNDVNIPGCWFFKLPHKDGNENNVGSPFAKDFLPRMEDGTLRAAVGRTHGTRALEINKMVSFWRNAHKRVSSQVVVWLKKGELPRAVTRHPAYSEEEDYGAILPQVVTAGTITRRAVEPTWLTASNARADRVGSELKAMVQVPPGYSLVGADVDSQELWIAAVLGEAHFAGMHGCTAFGWMTLQGKKSDGTDLHSKTAATVGISREHAKVFNYGRIYGAGQPFAERLLMQFNHRLTQQQAREKAQQMYAVTKGIRRFHLSEEGEWLVKELELAVDKAEDGTVSAQDVQKIQREAMRKSRRKKKWDVVAHRMWAGGTESEMFNKLESIALSASPQTPVLGCHISRALEPAVAKGEFLTSRVNWVVQSSAVDYLHLMLVSMKWLFEEYDINGRFCISIHDEVRYLVQEQDRYRAALALQITNLLTRCMFAYKLGLQDLPQSVAFFSAVDIDRCLRKEVTMNCATPSNPTGMEKKYGIPRGEALDIYQIIEITKGSLEKK.

The tract at residues 116–147 (ERPGRAEQSQMQDEDGLPELVEESSQPSFHHG) is disordered. Over residues 127 to 137 (QDEDGLPELVE) the composition is skewed to acidic residues.

This sequence belongs to the DNA polymerase type-A family. In terms of assembly, heterotrimer composed of a catalytic subunit and a homodimer of accessory subunits. Interacts with TTC3. Requires Mg(2+) as cofactor.

Its subcellular location is the mitochondrion. It localises to the mitochondrion matrix. The protein resides in the mitochondrion nucleoid. The enzyme catalyses DNA(n) + a 2'-deoxyribonucleoside 5'-triphosphate = DNA(n+1) + diphosphate. Its function is as follows. Involved in the replication of mitochondrial DNA. Associates with mitochondrial DNA. The polypeptide is DNA polymerase subunit gamma-1 (POLG) (Gallus gallus (Chicken)).